Reading from the N-terminus, the 70-residue chain is Large ribosomal subunit protein bL31c (70 aa).

The protein belongs to the bacterial ribosomal protein bL31 family. Type A subfamily. Part of the 50S ribosomal subunit.

Its subcellular location is the plastid. The protein localises to the chloroplast. Functionally, binds the 23S rRNA. This is Large ribosomal subunit protein bL31c from Emiliania huxleyi (Coccolithophore).